A 567-amino-acid polypeptide reads, in one-letter code: Arginine--tRNA ligase (567 aa).

Residues 121-131 carry the 'HIGH' region motif; that stretch reads ANPNGPLHVGH.

This sequence belongs to the class-I aminoacyl-tRNA synthetase family.

The protein resides in the cytoplasm. The catalysed reaction is tRNA(Arg) + L-arginine + ATP = L-arginyl-tRNA(Arg) + AMP + diphosphate. This chain is Arginine--tRNA ligase, found in Methanosarcina acetivorans (strain ATCC 35395 / DSM 2834 / JCM 12185 / C2A).